The chain runs to 117 residues: Prefoldin subunit beta (117 aa).

Belongs to the prefoldin subunit beta family. Heterohexamer of two alpha and four beta subunits.

The protein localises to the cytoplasm. In terms of biological role, molecular chaperone capable of stabilizing a range of proteins. Seems to fulfill an ATP-independent, HSP70-like function in archaeal de novo protein folding. The sequence is that of Prefoldin subunit beta from Pyrococcus furiosus (strain ATCC 43587 / DSM 3638 / JCM 8422 / Vc1).